Consider the following 134-residue polypeptide: Homeobox protein ceh-5 (134 aa).

A DNA-binding region (homeobox) is located at residues 35–94 (PKRPRTVFTDEQLEKLEESFNTSGYLSGSTRAKLAESLGLSDNQVKVWFQNRRTKQKKID).

It localises to the nucleus. This chain is Homeobox protein ceh-5 (ceh-5), found in Caenorhabditis elegans.